The following is a 312-amino-acid chain: Nicotinamide adenine dinucleotide transporter 1, chloroplastic (312 aa).

Solcar repeat units lie at residues 11 to 103 (KNVL…LKSF), 111 to 199 (LSVG…IKVY), and 211 to 299 (LNAR…VHRF). A run of 6 helical transmembrane segments spans residues 17–37 (AAAGAAAGVVAATFVCPLDVI), 78–98 (GLSPTVMALLSNWAIYFTMYD), 117–137 (VLAASGAGAATTIATNPLWVV), 171–191 (GLYSGLVPALAGISHVAIQFP), 216–232 (VAVASSIAKIFASTLTY), and 271–293 (FYRGCATNLLRTTPAAVITFTSF).

Belongs to the mitochondrial carrier (TC 2.A.29) family. In terms of tissue distribution, highly expressed in young leaf mesophyll cells, root tips and at the branches of adventitious roots. Low expression in all flower tissues and not detected in siliques and seeds.

Its subcellular location is the plastid. It is found in the chloroplast membrane. Inhibited by pyridoxal 5'-phosphate, bathophenanthroline, tannic acid, mersalyl, mercuric chloride, p-hydroxymercuribenzoate, p-hydroxymercuribenzoate sulfonate, bromocresol purple and N-ethylmaleimide. Mediates the NAD(+) import into chloroplast. Favors the NAD(+)(in)/ADP or AMP(out) antiport exchange, but is also able to catalyze a low unidirectional transport (uniport) of NAD(+). Transports NAD(+), nicotinic acid adenine dinucleotide, nicotinamide mononucleotide, nicotinic acid mononucleotide, FAD, FMN, TTP, TDP, TMP, UTP, UDP, UMP, CTP, CDP, CMP, GTP, GDP, GMP, 3'-AMP, ATP, ADP, and AMP, has low transport activity with cAMP, pyrophosphate, NADH and alpha-NAD(+), and has no activity with NADP(+), NADPH, nicotinamide, nicotinic acid, adenosine, thiamine mono- or diphosphate, inorganic phosphate, CoA, folate, NaCl, malate, malonate, citrate, fumarate, aspartate, glutamate, S-adenosylmethionine, lysine, arginine, and ornithine. The polypeptide is Nicotinamide adenine dinucleotide transporter 1, chloroplastic (NDT1) (Arabidopsis thaliana (Mouse-ear cress)).